Reading from the N-terminus, the 176-residue chain is MARLPKLAVFDLDYTLWPFWVDTHVDPPFHKSSDGTVRDRRGQDVRLYPEVPEVLKRLQSLGVPGAAASRTSEIEGANQLLELFDLFRYFVHREIYPGSKITHFERLQQKTGIPFSQMIFFDDERRNIVDVSKLGVTCIHIQNGMNLQTLSQGLETFAKAQTGPLRSSLEESPFEA.

Residue Asp11 is the Nucleophile of the active site. Residue Asp11 participates in Mg(2+) binding. The phosphate site is built by Leu12 and Asp13. Residue Asp13 participates in Mg(2+) binding. Asp13 serves as the catalytic Proton donor. Trp20 contributes to the substrate binding site. 3 residues coordinate phosphate: Ser69, Arg70, and Lys100. Arg70 lines the substrate pocket. Asp123 provides a ligand contact to Mg(2+).

This sequence belongs to the HAD-like hydrolase superfamily. Mg(2+) is required as a cofactor.

The enzyme catalyses O-phospho-L-tyrosyl-[protein] + H2O = L-tyrosyl-[protein] + phosphate. With respect to regulation, inhibited by vanadate and zinc, and slightly by calcium. In terms of biological role, magnesium-dependent phosphatase which may act as a tyrosine phosphatase. In Homo sapiens (Human), this protein is Magnesium-dependent phosphatase 1 (MDP1).